A 927-amino-acid polypeptide reads, in one-letter code: Roc-COR-CHAT protease (927 aa).

LRR repeat units follow at residues 38–61, 83–107, 109–125, and 127–151; these read AGQVTALSIGNSSLKKLVLGTEAQ, LPHLTHLYLNNCAIKDITIPKGFRS, QQVYLQKNGLTELVFEG, and CPALVLLDVSENQLKGLSFHSGFRA. The tract at residues 152-170 is LRR 5; it reads LKYIYATNNVLQKITFNRS. 2 LRR repeats span residues 171 to 194 and 195 to 217; these read MRLLNTLHLAKNQLTELAPFLSEI and ETMETLYLQGNQLLRIDREIWDR. Residues 436 to 623 enclose the COR domain; sequence EWLGVKEDLN…ELRWKKGVVL (188 aa). Active-site residues include His-796 and Cys-840.

In terms of biological role, a dedicated protease for gasdermin bGSDM; cleaves the bGSDM precursor, releasing the pore-forming moiety, which integrates into the membrane and triggers cell death. Probably involved in defense against bacteriophages. Expression of bGSDM and this neighboring protease is highly toxic in E.coli. Cells expressing the gene pair stop dividing and lose membrane integrity. Both proteins are required to kill E.coli. The bGSDM recognition site is larger than the 8 residues surrounding the cleavage site; replacement of the endogenous recognition site by the Runella site (NRVLGENM) in a number of other bGSDMs is not sufficient for them to be cleaved. This is Roc-COR-CHAT protease from Runella zeae (strain ATCC BAA-293 / DSM 19591 / LMG 21438 / NS12).